The chain runs to 631 residues: Phosphomethylpyrimidine synthase (631 aa).

Substrate contacts are provided by residues asparagine 239, methionine 268, tyrosine 297, histidine 333, serine 353–glycine 355, aspartate 394–arginine 397, and glutamate 433. Histidine 437 lines the Zn(2+) pocket. Tyrosine 460 serves as a coordination point for substrate. A Zn(2+)-binding site is contributed by histidine 501. Residues cysteine 581, cysteine 584, and cysteine 589 each contribute to the [4Fe-4S] cluster site.

It belongs to the ThiC family. Homodimer. [4Fe-4S] cluster serves as cofactor.

It carries out the reaction 5-amino-1-(5-phospho-beta-D-ribosyl)imidazole + S-adenosyl-L-methionine = 4-amino-2-methyl-5-(phosphooxymethyl)pyrimidine + CO + 5'-deoxyadenosine + formate + L-methionine + 3 H(+). Its pathway is cofactor biosynthesis; thiamine diphosphate biosynthesis. In terms of biological role, catalyzes the synthesis of the hydroxymethylpyrimidine phosphate (HMP-P) moiety of thiamine from aminoimidazole ribotide (AIR) in a radical S-adenosyl-L-methionine (SAM)-dependent reaction. In Salmonella schwarzengrund (strain CVM19633), this protein is Phosphomethylpyrimidine synthase.